Here is a 291-residue protein sequence, read N- to C-terminus: 4-hydroxy-tetrahydrodipicolinate synthase (291 aa).

Pyruvate is bound at residue T44. The active-site Proton donor/acceptor is Y132. K160 acts as the Schiff-base intermediate with substrate in catalysis. Position 202 (V202) interacts with pyruvate.

Belongs to the DapA family. As to quaternary structure, homotetramer; dimer of dimers.

It is found in the cytoplasm. It carries out the reaction L-aspartate 4-semialdehyde + pyruvate = (2S,4S)-4-hydroxy-2,3,4,5-tetrahydrodipicolinate + H2O + H(+). The protein operates within amino-acid biosynthesis; L-lysine biosynthesis via DAP pathway; (S)-tetrahydrodipicolinate from L-aspartate: step 3/4. Functionally, catalyzes the condensation of (S)-aspartate-beta-semialdehyde [(S)-ASA] and pyruvate to 4-hydroxy-tetrahydrodipicolinate (HTPA). In Clostridium perfringens (strain 13 / Type A), this protein is 4-hydroxy-tetrahydrodipicolinate synthase.